The following is a 115-amino-acid chain: U3-lycotoxin-Ls1k (115 aa).

Residues 1 to 20 (MKFVLLFGVLLVALFSYSSA) form the signal peptide. Residues 21–44 (EMLDDFGQADEDELLSLIEKEEAR) constitute a propeptide that is removed on maturation. 4 disulfide bridges follow: Cys48-Cys63, Cys55-Cys72, Cys62-Cys87, and Cys74-Cys85.

This sequence belongs to the neurotoxin 19 (CSTX) family. 01 subfamily. Expressed by the venom gland.

The protein localises to the secreted. The polypeptide is U3-lycotoxin-Ls1k (Lycosa singoriensis (Wolf spider)).